Reading from the N-terminus, the 180-residue chain is NADH-quinone oxidoreductase subunit I (180 aa).

2 consecutive 4Fe-4S ferredoxin-type domains span residues 50–80 and 90–119; these read LTRDPDGEERCVACNLCAVACPVGCISLQKA and EFFRINFSRCIFCGMCEEACPTTAIQMTPD. [4Fe-4S] cluster is bound by residues Cys60, Cys63, Cys66, Cys70, Cys99, Cys102, Cys105, and Cys109.

It belongs to the complex I 23 kDa subunit family. NDH-1 is composed of 14 different subunits. Subunits NuoA, H, J, K, L, M, N constitute the membrane sector of the complex. The cofactor is [4Fe-4S] cluster.

The protein resides in the cell inner membrane. The catalysed reaction is a quinone + NADH + 5 H(+)(in) = a quinol + NAD(+) + 4 H(+)(out). Functionally, NDH-1 shuttles electrons from NADH, via FMN and iron-sulfur (Fe-S) centers, to quinones in the respiratory chain. The immediate electron acceptor for the enzyme in this species is believed to be ubiquinone. Couples the redox reaction to proton translocation (for every two electrons transferred, four hydrogen ions are translocated across the cytoplasmic membrane), and thus conserves the redox energy in a proton gradient. The sequence is that of NADH-quinone oxidoreductase subunit I from Acinetobacter baylyi (strain ATCC 33305 / BD413 / ADP1).